We begin with the raw amino-acid sequence, 89 residues long: Small ribosomal subunit protein uS15 (89 aa).

Belongs to the universal ribosomal protein uS15 family. Part of the 30S ribosomal subunit. Forms a bridge to the 50S subunit in the 70S ribosome, contacting the 23S rRNA.

One of the primary rRNA binding proteins, it binds directly to 16S rRNA where it helps nucleate assembly of the platform of the 30S subunit by binding and bridging several RNA helices of the 16S rRNA. In terms of biological role, forms an intersubunit bridge (bridge B4) with the 23S rRNA of the 50S subunit in the ribosome. The sequence is that of Small ribosomal subunit protein uS15 from Marinomonas sp. (strain MWYL1).